The following is a 1141-amino-acid chain: Tetratricopeptide repeat protein 17 (1141 aa).

The stretch at 295–328 is one TPR 1 repeat; sequence FTSYYTLGNIYAMLGEYNHSVLCYDHALQARPGF. Positions 340-382 form a coiled coil; sequence CQQKLEQKLEAQHRSLQRTLNELKEYQKQHDHYLRQQEILEKH. TPR repeat units lie at residues 619 to 652, 689 to 722, 1014 to 1048, 1051 to 1084, and 1085 to 1118; these read WLIL…APLQ, PLTF…TTKC, SWVL…APHQ, DVPL…APHF, and AVNH…QPEF.

This sequence belongs to the TTC17 family. In terms of assembly, interacts with CATIP. Expressed in germ cells as well as in somatic cells of the testis (at protein level).

The protein localises to the cytoplasm. It localises to the cell membrane. Its subcellular location is the cytoskeleton. Plays a role in primary ciliogenesis by modulating actin polymerization. The polypeptide is Tetratricopeptide repeat protein 17 (TTC17) (Homo sapiens (Human)).